We begin with the raw amino-acid sequence, 175 residues long: Austinoid biosynthesis cluster protein F (175 aa).

Belongs to the trt14 isomerase family. As to quaternary structure, homodimer.

The protein operates within secondary metabolite biosynthesis; terpenoid biosynthesis. In terms of biological role, part of the gene cluster that mediates the biosynthesis of calidodehydroaustin, a fungal meroterpenoid. The first step of the pathway is the synthesis of 3,5-dimethylorsellinic acid by the polyketide synthase ausA. 3,5-dimethylorsellinic acid is then prenylated by the polyprenyl transferase ausN. Further epoxidation by the FAD-dependent monooxygenase ausM and cyclization by the probable terpene cyclase ausL lead to the formation of protoaustinoid A. Protoaustinoid A is then oxidized to spiro-lactone preaustinoid A3 by the combined action of the FAD-binding monooxygenases ausB and ausC, and the dioxygenase ausE. Acid-catalyzed keto-rearrangement and ring contraction of the tetraketide portion of preaustinoid A3 by ausJ lead to the formation of preaustinoid A4. The aldo-keto reductase ausK, with the help of ausH, is involved in the next step by transforming preaustinoid A4 into isoaustinone which is in turn hydroxylated by the P450 monooxygenase ausI to form austinolide. The cytochrome P450 monooxygenase ausG modifies austinolide to austinol. Austinol is further acetylated to austin by the O-acetyltransferase ausP, which spontaneously changes to dehydroaustin. The cytochrome P450 monooxygenase ausR then converts dehydroaustin is into 7-dehydrodehydroaustin. The hydroxylation catalyzed by ausR permits the O-acetyltransferase ausQ to add an additional acetyl group to the molecule, leading to the formation of acetoxydehydroaustin. The short chain dehydrogenase ausT catalyzes the reduction of the double bond present between carbon atoms 1 and 2 to convert 7-dehydrodehydroaustin into 1,2-dihydro-7-hydroxydehydroaustin. AusQ catalyzes not only an acetylation reaction but also the addition of the PKS ausV diketide product to 1,2-dihydro-7-hydroxydehydroaustin, forming precalidodehydroaustin. Finally, the iron/alpha-ketoglutarate-dependent dioxygenase converts precalidodehydroaustin into calidodehydroaustin. This Aspergillus calidoustus protein is Austinoid biosynthesis cluster protein F.